Here is a 233-residue protein sequence, read N- to C-terminus: uncharacterized protein (233 aa).

Belongs to the asfivirus H233R family.

This is an uncharacterized protein from Ornithodoros (relapsing fever ticks).